The chain runs to 330 residues: Ribosomal RNA small subunit methyltransferase C (330 aa).

Belongs to the methyltransferase superfamily. RsmC family. In terms of assembly, monomer.

Its subcellular location is the cytoplasm. The enzyme catalyses guanosine(1207) in 16S rRNA + S-adenosyl-L-methionine = N(2)-methylguanosine(1207) in 16S rRNA + S-adenosyl-L-homocysteine + H(+). In terms of biological role, specifically methylates the guanine in position 1207 of 16S rRNA in the 30S particle. The chain is Ribosomal RNA small subunit methyltransferase C from Haemophilus influenzae (strain PittEE).